A 552-amino-acid polypeptide reads, in one-letter code: HTH-type transcriptional regulator SgrR (552 aa).

One can recognise an HTH marR-type domain in the interval 1–116 (MPSARLQQQF…LVSHLGRSFR (116 aa)). Residues 26 to 49 (LNELAALLSCSRRHMRTLLNTMQD) constitute a DNA-binding region (H-T-H motif). Positions 163 to 492 (ELEADIAHHW…IDWQVDAARW (330 aa)) are solute-binding.

In terms of biological role, activates the small RNA gene sgrS under glucose-phosphate stress conditions as well as yfdZ. Represses its own transcription under both stress and non-stress conditions. Might act as a sensor of the intracellular accumulation of phosphoglucose by binding these molecules in its C-terminal solute-binding domain. The polypeptide is HTH-type transcriptional regulator SgrR (Escherichia coli O157:H7).